The sequence spans 258 residues: Glycerol-3-phosphate acyltransferase (258 aa).

A run of 6 helical transmembrane segments spans residues 11-31 (IILA…IIIV), 62-82 (LVVA…AILL), 94-114 (SYFI…YYKF), 124-144 (LGLL…IWFI), 160-180 (ALII…YFIW), and 212-232 (WASG…ILAW).

The protein belongs to the PlsY family. Probably interacts with PlsX.

Its subcellular location is the cell membrane. The enzyme catalyses an acyl phosphate + sn-glycerol 3-phosphate = a 1-acyl-sn-glycero-3-phosphate + phosphate. The protein operates within lipid metabolism; phospholipid metabolism. In terms of biological role, catalyzes the transfer of an acyl group from acyl-phosphate (acyl-PO(4)) to glycerol-3-phosphate (G3P) to form lysophosphatidic acid (LPA). This enzyme utilizes acyl-phosphate as fatty acyl donor, but not acyl-CoA or acyl-ACP. The chain is Glycerol-3-phosphate acyltransferase from Mycoplasma mycoides subsp. mycoides SC (strain CCUG 32753 / NCTC 10114 / PG1).